The primary structure comprises 157 residues: Crossover junction endodeoxyribonuclease RuvC (157 aa).

Active-site residues include aspartate 7, glutamate 67, and aspartate 140. Mg(2+)-binding residues include aspartate 7, glutamate 67, and aspartate 140.

Belongs to the RuvC family. Homodimer which binds Holliday junction (HJ) DNA. The HJ becomes 2-fold symmetrical on binding to RuvC with unstacked arms; it has a different conformation from HJ DNA in complex with RuvA. In the full resolvosome a probable DNA-RuvA(4)-RuvB(12)-RuvC(2) complex forms which resolves the HJ. The cofactor is Mg(2+).

The protein localises to the cytoplasm. The catalysed reaction is Endonucleolytic cleavage at a junction such as a reciprocal single-stranded crossover between two homologous DNA duplexes (Holliday junction).. Its function is as follows. The RuvA-RuvB-RuvC complex processes Holliday junction (HJ) DNA during genetic recombination and DNA repair. Endonuclease that resolves HJ intermediates. Cleaves cruciform DNA by making single-stranded nicks across the HJ at symmetrical positions within the homologous arms, yielding a 5'-phosphate and a 3'-hydroxyl group; requires a central core of homology in the junction. The consensus cleavage sequence is 5'-(A/T)TT(C/G)-3'. Cleavage occurs on the 3'-side of the TT dinucleotide at the point of strand exchange. HJ branch migration catalyzed by RuvA-RuvB allows RuvC to scan DNA until it finds its consensus sequence, where it cleaves and resolves the cruciform DNA. The sequence is that of Crossover junction endodeoxyribonuclease RuvC from Rickettsia rickettsii (strain Iowa).